The chain runs to 99 residues: Mu-hexatoxin-Mg1c (99 aa).

3 disulfides stabilise this stretch: C61–C75, C68–C80, and C74–C94.

This sequence belongs to the neurotoxin 14 (magi-1) family. 09 (magi-1) subfamily. In terms of tissue distribution, expressed by the venom gland.

The protein resides in the secreted. Its function is as follows. Inhibits voltage-gated sodium channels by binding to site 3. Insecticidal neurotoxin. This Macrothele gigas (Japanese funnel web spider) protein is Mu-hexatoxin-Mg1c.